Consider the following 447-residue polypeptide: Imidazolonepropionase (447 aa).

Fe(3+)-binding residues include His-85 and His-87. Zn(2+) is bound by residues His-85 and His-87. Residues Arg-94, Tyr-157, and His-190 each coordinate 4-imidazolone-5-propanoate. Tyr-157 contributes to the N-formimidoyl-L-glutamate binding site. Residue His-255 participates in Fe(3+) binding. His-255 contacts Zn(2+). Position 258 (Glu-258) interacts with 4-imidazolone-5-propanoate. Asp-329 serves as a coordination point for Fe(3+). Position 329 (Asp-329) interacts with Zn(2+). Asn-331 and Gly-333 together coordinate N-formimidoyl-L-glutamate. Ser-334 provides a ligand contact to 4-imidazolone-5-propanoate.

This sequence belongs to the metallo-dependent hydrolases superfamily. HutI family. Zn(2+) serves as cofactor. Fe(3+) is required as a cofactor.

The protein localises to the cytoplasm. The enzyme catalyses 4-imidazolone-5-propanoate + H2O = N-formimidoyl-L-glutamate. It functions in the pathway amino-acid degradation; L-histidine degradation into L-glutamate; N-formimidoyl-L-glutamate from L-histidine: step 3/3. In terms of biological role, catalyzes the hydrolytic cleavage of the carbon-nitrogen bond in imidazolone-5-propanoate to yield N-formimidoyl-L-glutamate. It is the third step in the universal histidine degradation pathway. This is Imidazolonepropionase from Shouchella clausii (strain KSM-K16) (Alkalihalobacillus clausii).